The sequence spans 540 residues: Beta-secretase (540 aa).

Positions 1–31 (MHFSLPTSRIVVVVPAAAICIVCVLIETCTA) are cleaved as a signal peptide. The region spanning 81–435 (YYIEVDIGTP…DRENKRVGFA (355 aa)) is the Peptidase A1 domain. Catalysis depends on residues aspartate 99 and aspartate 302. Disulfide bonds link cysteine 222-cysteine 439, cysteine 291-cysteine 469, and cysteine 345-cysteine 397. A helical transmembrane segment spans residues 483–503 (ITAYVLAAICLVCLIPVIVFA). Over 504–540 (LTHQINKRCKGRRGRGVVNHHRLDQEGLAENEPNSDP) the chain is Cytoplasmic.

Belongs to the peptidase A1 family.

It localises to the membrane. The chain is Beta-secretase from Strongylocentrotus purpuratus (Purple sea urchin).